We begin with the raw amino-acid sequence, 990 residues long: Leucine--tRNA ligase (990 aa).

Positions 74-85 match the 'HIGH' region motif; it reads PYPSGKGLHVGH. A disordered region spans residues 573 to 602; it reads LPINLPDVPDYSPKTFDPEDAESDPEAPLS. Residues 763–767 carry the 'KMSKS' region motif; sequence KMGKS. Lys-766 serves as a coordination point for ATP.

The protein belongs to the class-I aminoacyl-tRNA synthetase family.

Its subcellular location is the cytoplasm. The catalysed reaction is tRNA(Leu) + L-leucine + ATP = L-leucyl-tRNA(Leu) + AMP + diphosphate. This is Leucine--tRNA ligase from Bifidobacterium adolescentis (strain ATCC 15703 / DSM 20083 / NCTC 11814 / E194a).